Here is a 504-residue protein sequence, read N- to C-terminus: Maturase K (504 aa).

Belongs to the intron maturase 2 family. MatK subfamily.

The protein localises to the plastid. Its subcellular location is the chloroplast. Its function is as follows. Usually encoded in the trnK tRNA gene intron. Probably assists in splicing its own and other chloroplast group II introns. The protein is Maturase K of Arabidopsis thaliana (Mouse-ear cress).